Here is a 145-residue protein sequence, read N- to C-terminus: Ribosomal RNA large subunit methyltransferase H (145 aa).

S-adenosyl-L-methionine is bound by residues Leu64, Gly93, and 112 to 117 (LSPLTF).

Belongs to the RNA methyltransferase RlmH family. As to quaternary structure, homodimer.

It is found in the cytoplasm. It carries out the reaction pseudouridine(1915) in 23S rRNA + S-adenosyl-L-methionine = N(3)-methylpseudouridine(1915) in 23S rRNA + S-adenosyl-L-homocysteine + H(+). Functionally, specifically methylates the pseudouridine at position 1915 (m3Psi1915) in 23S rRNA. This is Ribosomal RNA large subunit methyltransferase H from Prochlorococcus marinus (strain NATL1A).